The sequence spans 54 residues: Ovomucoid (54 aa).

Residues 4–54 enclose the Kazal-like domain; that stretch reads VDCSDYPKPACTVEYMPLCGSDNKTYDNKCNFCNAVVDSNGTLTLSHFGKC. Cystine bridges form between cysteine 6/cysteine 36, cysteine 14/cysteine 33, and cysteine 22/cysteine 54. Asparagine 43 carries an N-linked (GlcNAc...) asparagine glycan.

The protein localises to the secreted. This chain is Ovomucoid, found in Anser anser anser (Western greylag goose).